We begin with the raw amino-acid sequence, 203 residues long: Holliday junction branch migration complex subunit RuvA (203 aa).

The tract at residues 1–63 is domain I; it reads MIGKLSGKID…EEHIHLYGFL (63 aa). Positions 64–142 are domain II; the sequence is TIEEKNFFNL…KISTGAAIIN (79 aa). Residues 143–149 form a flexible linker region; it reads DSLNIKN. Residues 150–203 are domain III; it reads ITSVASNEVIKALVNLGFSRFEAQNSVQGIVIQNPEISIDELIKTALKNRNAGL.

This sequence belongs to the RuvA family. In terms of assembly, homotetramer. Forms an RuvA(8)-RuvB(12)-Holliday junction (HJ) complex. HJ DNA is sandwiched between 2 RuvA tetramers; dsDNA enters through RuvA and exits via RuvB. An RuvB hexamer assembles on each DNA strand where it exits the tetramer. Each RuvB hexamer is contacted by two RuvA subunits (via domain III) on 2 adjacent RuvB subunits; this complex drives branch migration. In the full resolvosome a probable DNA-RuvA(4)-RuvB(12)-RuvC(2) complex forms which resolves the HJ.

It is found in the cytoplasm. In terms of biological role, the RuvA-RuvB-RuvC complex processes Holliday junction (HJ) DNA during genetic recombination and DNA repair, while the RuvA-RuvB complex plays an important role in the rescue of blocked DNA replication forks via replication fork reversal (RFR). RuvA specifically binds to HJ cruciform DNA, conferring on it an open structure. The RuvB hexamer acts as an ATP-dependent pump, pulling dsDNA into and through the RuvAB complex. HJ branch migration allows RuvC to scan DNA until it finds its consensus sequence, where it cleaves and resolves the cruciform DNA. The protein is Holliday junction branch migration complex subunit RuvA of Rickettsia akari (strain Hartford).